A 358-amino-acid polypeptide reads, in one-letter code: MATIVVAMSGGVDSSAVAAMLHEQGHHVIGITLQLYDYGIAVGKKNACCAGKDIYDAKMVANKLGIPHYVLDYENKFKESVIDNFVNSYLHGETPLPCVQCNKLVKFRDLINTAKELGADKLATGHYVRKINGYNGAELHTGLDAAKDQSYFLFTITREQLEYLIFPLGGFTKYETRKLASKFGLDVADKPDSQDICFVPDGNYKTVINKIRPEASTSGKIVHINGFELGEHSGIINYTIGQRRGLGIAYNEPLYVVKIDPSNNIVYVGQESALHVHEFIIKDVNWLADEIKDNEKLAVDVKIRSTRPPCHAEISKLCNDKIKVQFLSAEKAVAPGQACVIYAGERVLGGGWITRNIR.

Residues 7–14 and L33 contribute to the ATP site; that span reads AMSGGVDS. The active-site Nucleophile is C101. A disulfide bridge connects residues C101 and C197. G125 contacts ATP. The segment at 147–149 is interaction with tRNA; the sequence is KDQ. The Cysteine persulfide intermediate role is filled by C197.

The protein belongs to the MnmA/TRMU family.

It localises to the cytoplasm. The catalysed reaction is S-sulfanyl-L-cysteinyl-[protein] + uridine(34) in tRNA + AH2 + ATP = 2-thiouridine(34) in tRNA + L-cysteinyl-[protein] + A + AMP + diphosphate + H(+). Functionally, catalyzes the 2-thiolation of uridine at the wobble position (U34) of tRNA, leading to the formation of s(2)U34. In Rickettsia typhi (strain ATCC VR-144 / Wilmington), this protein is tRNA-specific 2-thiouridylase MnmA.